A 223-amino-acid polypeptide reads, in one-letter code: Ras-related protein Rab-32 (223 aa).

A2 is subject to N-acetylalanine. GTP contacts are provided by V34, G35, K36, T37, S38, S49, Q50, Y52, and T55. Residue T37 coordinates Mg(2+). The Switch 1 motif lies at 46 to 60; sequence QLFSQHYRATIGVDF. Position 55 (T55) interacts with Mg(2+). S69 carries the post-translational modification Phosphoserine. D79 contributes to the Mg(2+) binding site. GTP contacts are provided by G82, N141, K142, D144, A173, and K174. A Switch 2 motif is present at residues 82–95; sequence GQERFGNMTRVYYK. The tract at residues 176–195 is PKA-RII subunit binding domain; the sequence is NINIDEATRFLVENMLANQQ. S-geranylgeranyl cysteine attachment occurs at residues C222 and C223.

The protein belongs to the small GTPase superfamily. Rab family. In terms of assembly, interacts with ANKRD27. A decreased interaction with ANKRD27 seen in the presence of SGSM2. Interacts with LRRK2 (via N-terminus); this interaction results in stimulation of RAB10 phosphorylation by LRRK2. Requires Mg(2+) as cofactor. Widely expressed with highest levels in liver. Strong expression also found in melanocyte, platelet, mast cell and fibroblast cell lines.

It is found in the mitochondrion. The protein resides in the mitochondrion outer membrane. Its subcellular location is the cytoplasmic vesicle. It localises to the phagosome. The protein localises to the phagosome membrane. It is found in the melanosome. The protein resides in the melanosome membrane. It catalyses the reaction GTP + H2O = GDP + phosphate + H(+). With respect to regulation, regulated by guanine the nucleotide exchange factor (GEF) BLOC-3 complex composed of HPS1 and HPS4 which promote the exchange of bound GDP for free GTP. Regulated by the GTPase activating protein (GAP) SGSM2/RUTBC1 which increases the GTP hydrolysis activity. Inhibited by GDP dissociation inhibitors (GDIs) which prevent Rab-GDP dissociation. Its function is as follows. The small GTPases Rab are key regulators of intracellular membrane trafficking, from the formation of transport vesicles to their fusion with membranes. Rabs cycle between an inactive GDP-bound form and an active GTP-bound form that is able to recruit to membranes different set of downstream effectors directly responsible for vesicle formation, movement, tethering and fusion. Also acts as an A-kinase anchoring protein by binding to the type II regulatory subunit of protein kinase A and anchoring it to the mitochondrion. Also involved in synchronization of mitochondrial fission. Plays a role in the maturation of phagosomes that engulf pathogens, such as S.aureus and M.tuberculosis. Plays an important role in the control of melanin production and melanosome biogenesis. In concert with RAB38, regulates the proper trafficking of melanogenic enzymes TYR, TYRP1 and DCT/TYRP2 to melanosomes in melanocytes. Stimulates phosphorylation of RAB10 'Thr-73' by LRRK2. The polypeptide is Ras-related protein Rab-32 (Mus musculus (Mouse)).